We begin with the raw amino-acid sequence, 186 residues long: MSSLADTIHIENVVASSDLGQELALDQLATDLDGAEYNPEDFPGVVYRLQEPKSATLIFRSGKVVCTGAKSVDAVHDALEIVFDDLRELGIDVDSTPPVKVQNIVSSASLEQSLNLNAIAIGLGLEQIEYEPEQFPGLVYRLDDPDVVVLLFGSGKLVITGAAESADAQHALAHVNDRLTELGLLE.

Repeat copies occupy residues 10-86 (IENV…FDDL) and 101-179 (VQNI…NDRL).

It belongs to the TBP family.

Its function is as follows. General factor that plays a role in the activation of archaeal genes transcribed by RNA polymerase. Binds specifically to the TATA box promoter element which lies close to the position of transcription initiation. This is TATA-box-binding protein F (tbpF) from Halobacterium salinarum (strain ATCC 700922 / JCM 11081 / NRC-1) (Halobacterium halobium).